The chain runs to 312 residues: Flavonol 3-sulfotransferase (312 aa).

Lysine 59–tryptophan 64 contributes to the 3'-phosphoadenylyl sulfate binding site. Histidine 119 serves as the catalytic Proton acceptor. 3'-phosphoadenylyl sulfate is bound by residues arginine 141, serine 149, tyrosine 207, and arginine 277–glycine 279.

This sequence belongs to the sulfotransferase 1 family. As to expression, highest in shoot tips and lowest in mature leaves and roots.

Its subcellular location is the cytoplasm. Functionally, sulfotransferase that utilizes 3'-phospho-5'-adenylyl sulfate (PAPS) as sulfonate donor to catalyze the sulfate conjugation of quercetin, rhamnetin and isorhamnetin but not kaempferol. O-sulfation of position 3 of flavonol. May play a role in auxin transport. In Flaveria bidentis (Coastal plain yellowtops), this protein is Flavonol 3-sulfotransferase.